We begin with the raw amino-acid sequence, 44 residues long: uncharacterized protein (44 aa).

Residues 6–26 (SILIRGGGGVLIVLILLLWIV) form a helical membrane-spanning segment.

It localises to the membrane. This is an uncharacterized protein from Ornithodoros (relapsing fever ticks).